The chain runs to 695 residues: L-type lectin-domain containing receptor kinase S.7 (695 aa).

A signal peptide spans 1–23; that stretch reads MPPRCRRLPLLFILLLAVRPLSA. Residues 24–331 lie on the Extracellular side of the membrane; the sequence is AAASSIAAAP…NHRRRHLFYK (308 aa). Residues 37 to 276 form a legume-lectin like region; it reads YRRISWASNL…VERWTFRTFG (240 aa). N-linked (GlcNAc...) asparagine glycans are attached at residues Asn45 and Asn279. Residues 286-320 are compositionally biased toward pro residues; that stretch reads PTKYIGPMPPNNQPLPPPPSPSPSPPPPSPPPPPH. Positions 286–323 are disordered; sequence PTKYIGPMPPNNQPLPPPPSPSPSPPPPSPPPPPHPNH. A helical transmembrane segment spans residues 332–352; the sequence is VLGGVLGGMVLLGLVVVGSAV. Over 353–695 the chain is Cytoplasmic; that stretch reads LLGRSVRRKN…TANTAFFSCR (343 aa). Thr376 is modified (phosphothreonine). Ser378 bears the Phosphoserine mark. Phosphothreonine occurs at positions 386 and 403. One can recognise a Protein kinase domain in the interval 389-661; the sequence is FDSGNVIGVG…SMLDGTAPLI (273 aa). ATP contacts are provided by residues 395 to 403 and Lys418; that span reads IGVGGSGAT. The active-site Proton acceptor is the Asp514. At Thr657 the chain carries Phosphothreonine.

It in the N-terminal section; belongs to the leguminous lectin family. This sequence in the C-terminal section; belongs to the protein kinase superfamily. Ser/Thr protein kinase family. As to quaternary structure, interacts with INP1. Interaction with INP1 is required for DAF1 polar localization at the future aperture sites in tetrads. Post-translationally, autophosphorylated at Thr-376; Ser-378; Thr-386; Thr-403 and Thr-657. In terms of tissue distribution, expressed in roots, leaves, lemma, palea, pistil and anthers.

The protein resides in the cell membrane. It localises to the cytoplasm. The protein localises to the cytosol. It carries out the reaction L-seryl-[protein] + ATP = O-phospho-L-seryl-[protein] + ADP + H(+). The enzyme catalyses L-threonyl-[protein] + ATP = O-phospho-L-threonyl-[protein] + ADP + H(+). In terms of biological role, legume-lectin receptor-like kinase required for normal pollen development and male fertility. Regulates pollen exine assembly and aperture development. Plays a critical role in annulus formation, and may participate in the formation of the fibrillar-granular layer underneath the operculum. May function by regulating the expression of genes involved in pollen exine development. Kinase activity is required for its function in pollen development. This chain is L-type lectin-domain containing receptor kinase S.7, found in Oryza sativa subsp. japonica (Rice).